Consider the following 639-residue polypeptide: CTTNBP2 N-terminal-like protein (639 aa).

A coiled-coil region spans residues 87–285; sequence MKQCKNMQER…DLEASHQHSS (199 aa). Residues S284 and S285 each carry the phosphoserine modification. Disordered stretches follow at residues 387-430, 463-490, and 511-609; these read VENG…PCSS, RHKF…LSPT, and RFTS…AASL. Low complexity-rich tracts occupy residues 405–430 and 467–477; these read PLSS…PCSS and QSQADQDQQAS. A phosphoserine mark is found at S481, S488, S523, S527, S560, S563, and S568. Positions 511–529 are enriched in polar residues; that stretch reads RFTSQQGPIKPVSPNSSPF. Residues T570 and T590 each carry the phosphothreonine modification. Over residues 587 to 600 the composition is skewed to low complexity; it reads PGLTPSPSATTPLT. At S592 the chain carries Phosphoserine.

Interacts with CTTN/cortactin; this interaction may redistribute CTTN to stress fibers. May form homomers. Associates with the core of STRIPAK complexes composed of PP2A catalytic and scaffolding subunits, the striatins (PP2A regulatory subunits), the striatin-associated proteins MOB4, STRIP1 and STRIP2, PDCD10 and members of the STE20 kinases, such as STK24 and STK26.

The protein localises to the cell projection. Its subcellular location is the lamellipodium. It localises to the cytoplasm. The protein resides in the cytoskeleton. It is found in the stress fiber. Functionally, regulates lamellipodial actin dynamics in a CTTN-dependent manner. Associates with core striatin-interacting phosphatase and kinase (STRIPAK) complex to form CTTNBP2NL-STRIPAK complexes. STRIPAK complexes have critical roles in protein (de)phosphorylation and are regulators of multiple signaling pathways including Hippo, MAPK, nuclear receptor and cytoskeleton remodeling. Different types of STRIPAK complexes are involved in a variety of biological processes such as cell growth, differentiation, apoptosis, metabolism and immune regulation. This Homo sapiens (Human) protein is CTTNBP2 N-terminal-like protein.